The sequence spans 29 residues: Cytochrome b6-f complex subunit 8 (29 aa).

The helical transmembrane segment at 3–23 (IVSIGWAALMVVFTFSLSLVV) threads the bilayer.

This sequence belongs to the PetN family. The 4 large subunits of the cytochrome b6-f complex are cytochrome b6, subunit IV (17 kDa polypeptide, PetD), cytochrome f and the Rieske protein, while the 4 small subunits are PetG, PetL, PetM and PetN. The complex functions as a dimer.

The protein localises to the plastid. The protein resides in the chloroplast thylakoid membrane. Component of the cytochrome b6-f complex, which mediates electron transfer between photosystem II (PSII) and photosystem I (PSI), cyclic electron flow around PSI, and state transitions. The polypeptide is Cytochrome b6-f complex subunit 8 (Zygnema circumcarinatum (Green alga)).